A 332-amino-acid chain; its full sequence is Ribosomal RNA small subunit methyltransferase C (332 aa).

The protein belongs to the methyltransferase superfamily. RsmC family. Monomer.

It is found in the cytoplasm. It carries out the reaction guanosine(1207) in 16S rRNA + S-adenosyl-L-methionine = N(2)-methylguanosine(1207) in 16S rRNA + S-adenosyl-L-homocysteine + H(+). In terms of biological role, specifically methylates the guanine in position 1207 of 16S rRNA in the 30S particle. This chain is Ribosomal RNA small subunit methyltransferase C, found in Stutzerimonas stutzeri (strain A1501) (Pseudomonas stutzeri).